Here is a 119-residue protein sequence, read N- to C-terminus: Large ribosomal subunit protein uL22 (119 aa).

The protein belongs to the universal ribosomal protein uL22 family. In terms of assembly, part of the 50S ribosomal subunit.

This protein binds specifically to 23S rRNA; its binding is stimulated by other ribosomal proteins, e.g. L4, L17, and L20. It is important during the early stages of 50S assembly. It makes multiple contacts with different domains of the 23S rRNA in the assembled 50S subunit and ribosome. Its function is as follows. The globular domain of the protein is located near the polypeptide exit tunnel on the outside of the subunit, while an extended beta-hairpin is found that lines the wall of the exit tunnel in the center of the 70S ribosome. This Trichodesmium erythraeum (strain IMS101) protein is Large ribosomal subunit protein uL22.